Reading from the N-terminus, the 343-residue chain is Protein RecA (343 aa).

Belongs to the RecA family.

Its subcellular location is the cytoplasm. In terms of biological role, can catalyze the hydrolysis of ATP in the presence of single-stranded DNA, the ATP-dependent uptake of single-stranded DNA by duplex DNA, and the ATP-dependent hybridization of homologous single-stranded DNAs. It interacts with LexA causing its activation and leading to its autocatalytic cleavage. This chain is Protein RecA, found in Coxiella burnetii (strain RSA 493 / Nine Mile phase I).